A 425-amino-acid chain; its full sequence is Ribosome biogenesis protein WDR12 homolog (425 aa).

The tract at residues 7-93 (IQAKFFTKDE…ETIVHLEYLE (87 aa)) is ubiquitin-like (UBL) domain. WD repeat units lie at residues 105 to 142 (IHDDWVSAVHASEAGILSGCYDNTLHIWDTATGTRRLT), 145 to 187 (GHLG…NAVE), 194 to 233 (GHARSVDCVDVSWNGAKFVTGSFDHMLKVWSADPDSTDTD), 265 to 303 (GHHEAVTGVQWTDEGEVATCSMDHTLRIWDVELGGMKSQ), 305 to 344 (AGSKAFLGISYSRLNRQIVSASSDRHVRLWDPRTKDGTIV), 350 to 390 (SHAG…APLY), and 394 to 425 (GHEDKVLAVDWSLGKYMISGGADNQLKIFEHK). Residues 227 to 253 (PDSTDTDHGQDGSEEGSRKKQKTVDGK) are disordered. Residues 231–253 (DTDHGQDGSEEGSRKKQKTVDGK) show a composition bias toward basic and acidic residues.

Belongs to the WD repeat WDR12/YTM1 family.

The protein resides in the nucleus. It localises to the nucleolus. It is found in the nucleoplasm. Required for maturation of ribosomal RNAs and formation of the large ribosomal subunit. This is Ribosome biogenesis protein WDR12 homolog from Ixodes scapularis (Black-legged tick).